Consider the following 264-residue polypeptide: Thiazole synthase (264 aa).

Residue lysine 106 is the Schiff-base intermediate with DXP of the active site. Residues glycine 167, 193-194 (AG), and 215-216 (NT) each bind 1-deoxy-D-xylulose 5-phosphate.

The protein belongs to the ThiG family. As to quaternary structure, homotetramer. Forms heterodimers with either ThiH or ThiS.

The protein localises to the cytoplasm. The catalysed reaction is [ThiS sulfur-carrier protein]-C-terminal-Gly-aminoethanethioate + 2-iminoacetate + 1-deoxy-D-xylulose 5-phosphate = [ThiS sulfur-carrier protein]-C-terminal Gly-Gly + 2-[(2R,5Z)-2-carboxy-4-methylthiazol-5(2H)-ylidene]ethyl phosphate + 2 H2O + H(+). Its pathway is cofactor biosynthesis; thiamine diphosphate biosynthesis. Its function is as follows. Catalyzes the rearrangement of 1-deoxy-D-xylulose 5-phosphate (DXP) to produce the thiazole phosphate moiety of thiamine. Sulfur is provided by the thiocarboxylate moiety of the carrier protein ThiS. In vitro, sulfur can be provided by H(2)S. This chain is Thiazole synthase, found in Stenotrophomonas maltophilia (strain R551-3).